Reading from the N-terminus, the 798-residue chain is Bromodomain-containing protein 2 (798 aa).

M1 is modified (N-acetylmethionine). The interval 1–21 (MLQNVTPHKLPGEGNAGLLGL) is disordered. A Phosphothreonine modification is found at T6. The residue at position 36 (S36) is a Phosphoserine. The tract at residues 53 to 72 (LQLAPANPPPPEVSNPKKPG) is disordered. Residues 73–179 (RVTNQLQYLH…KIFLQKVASM (107 aa)) enclose the Bromo 1 domain. Positions 111, 154, 155, 156, 159, and 160 each coordinate a protein. 3 disordered regions span residues 267-348 (PPAQ…LSEQ), 454-645 (DEPL…YDEK), and 736-798 (KRLQ…SDSG). Residues 284–297 (TTTPTPTAILAPGS) are compositionally biased toward low complexity. 3 positions are modified to phosphoserine: S297, S300, and S304. A compositionally biased stretch (basic and acidic residues) spans 315–331 (MRRESGRPIKPPRKDLP). The Bromo 2 domain maps to 343 to 452 (GKLSEQLKHC…DVFEFRYAKM (110 aa)). Positions 480–512 (SSEESSSESSSEEEEEEEEDEDEEESESSDSEE) are enriched in acidic residues. Residues 542-564 (KPKRKREKKEKKKKRKAEKHRGR) are compositionally biased toward basic residues. The Nuclear localization signal motif lies at 553–557 (KKKRK). Positions 630-712 (DSEEEEESRP…SCLRKKPRKP (83 aa)) constitute an NET domain. S631 is subject to Phosphoserine. Residues 772 to 792 (SASSSSSDSSSSSSSSSSSDT) show a composition bias toward low complexity.

Belongs to the BET family. In terms of assembly, homodimer. Interacts with E2F1. Interacts with (acetylated) STAT3; promoting STAT3 recruitment to chromatin. Interacts with CTCF; promoting BRD2 recruitment to chromatin. Predominantly expressed in the testis, followed by ovary, placenta, embryo and to a lower extent in somatic tissues.

It is found in the nucleus. The protein localises to the chromosome. Its function is as follows. Chromatin reader protein that specifically recognizes and binds histone H4 acetylated at 'Lys-5' and 'Lys-12' (H4K5ac and H4K12ac, respectively), thereby controlling gene expression and remodeling chromatin structures. Recruits transcription factors and coactivators to target gene sites, and activates RNA polymerase II machinery for transcriptional elongation. Plays a key role in genome compartmentalization via its association with CTCF and cohesin: recruited to chromatin by CTCF and promotes formation of topologically associating domains (TADs) via its ability to bind acetylated histones, contributing to CTCF boundary formation and enhancer insulation. Also recognizes and binds acetylated non-histone proteins, such as STAT3. Involved in inflammatory response by regulating differentiation of naive CD4(+) T-cells into T-helper Th17: recognizes and binds STAT3 acetylated at 'Lys-87', promoting STAT3 recruitment to chromatin. In addition to acetylated lysines, also recognizes and binds lysine residues on histones that are both methylated and acetylated on the same side chain to form N6-acetyl-N6-methyllysine (Kacme), an epigenetic mark of active chromatin associated with increased transcriptional initiation. Specifically binds histone H4 acetyl-methylated at 'Lys-5' and 'Lys-12' (H4K5acme and H4K12acme, respectively). The sequence is that of Bromodomain-containing protein 2 from Mus musculus (Mouse).